The chain runs to 98 residues: NADH-ubiquinone oxidoreductase chain 4L (98 aa).

3 helical membrane-spanning segments follow: residues 2–22 (QMTM…LLMF), 26–46 (FMSS…LMSI), and 59–79 (FPLV…SLLV).

This sequence belongs to the complex I subunit 4L family. As to quaternary structure, core subunit of respiratory chain NADH dehydrogenase (Complex I) which is composed of 45 different subunits.

It localises to the mitochondrion inner membrane. The enzyme catalyses a ubiquinone + NADH + 5 H(+)(in) = a ubiquinol + NAD(+) + 4 H(+)(out). In terms of biological role, core subunit of the mitochondrial membrane respiratory chain NADH dehydrogenase (Complex I) which catalyzes electron transfer from NADH through the respiratory chain, using ubiquinone as an electron acceptor. Part of the enzyme membrane arm which is embedded in the lipid bilayer and involved in proton translocation. The sequence is that of NADH-ubiquinone oxidoreductase chain 4L (MT-ND4L) from Echinosorex gymnura (Moon rat).